A 382-amino-acid polypeptide reads, in one-letter code: Galactokinase (382 aa).

A substrate-binding site is contributed by 34 to 37 (EHTD). 124–130 (GAGLSSS) contributes to the ATP binding site. Mg(2+) contacts are provided by Ser-130 and Glu-162. Asp-174 serves as the catalytic Proton acceptor. Position 223 (Tyr-223) interacts with substrate.

Belongs to the GHMP kinase family. GalK subfamily.

Its subcellular location is the cytoplasm. It carries out the reaction alpha-D-galactose + ATP = alpha-D-galactose 1-phosphate + ADP + H(+). The protein operates within carbohydrate metabolism; galactose metabolism. In terms of biological role, catalyzes the transfer of the gamma-phosphate of ATP to D-galactose to form alpha-D-galactose-1-phosphate (Gal-1-P). The sequence is that of Galactokinase from Escherichia coli O81 (strain ED1a).